Reading from the N-terminus, the 405-residue chain is L-rhamnonate dehydratase (405 aa).

Substrate is bound by residues His-33 and Arg-59. Mg(2+) is bound by residues Asp-226, Glu-252, and Glu-280. His-329 functions as the Proton acceptor in the catalytic mechanism. Position 349 (Glu-349) interacts with substrate.

This sequence belongs to the mandelate racemase/muconate lactonizing enzyme family. RhamD subfamily. In terms of assembly, homooctamer; tetramer of dimers. It depends on Mg(2+) as a cofactor.

The enzyme catalyses L-rhamnonate = 2-dehydro-3-deoxy-L-rhamnonate + H2O. Its function is as follows. Catalyzes the dehydration of L-rhamnonate to 2-keto-3-deoxy-L-rhamnonate (KDR). In Escherichia coli O6:K15:H31 (strain 536 / UPEC), this protein is L-rhamnonate dehydratase.